The primary structure comprises 636 residues: Rust resistance kinase Lr10 (636 aa).

The N-terminal stretch at 1–24 (MSKLLVIALLLLPLINHGIYLATA) is a signal peptide. Residues 25 to 276 (WDDQDFFKYC…MPDPHGSHIK (252 aa)) are Extracellular-facing. Asparagine 56, asparagine 177, and asparagine 222 each carry an N-linked (GlcNAc...) asparagine glycan. The chain crosses the membrane as a helical span at residues 277-297 (VIAATSSVAAFVALLLTVATV). The Cytoplasmic portion of the chain corresponds to 298-636 (LYLSLKTRYN…FVSSENELMS (339 aa)). The 290-residue stretch at 339 to 628 (RRFKEKVGQG…SLQMPPKPFV (290 aa)) folds into the Protein kinase domain. ATP contacts are provided by residues 345 to 353 (VGQGGFGSV) and lysine 367. The active-site Proton acceptor is the aspartate 466.

The protein belongs to the protein kinase superfamily. Ser/Thr protein kinase family. In terms of tissue distribution, specifically expressed in the aerial parts of the plant.

It localises to the cell membrane. It catalyses the reaction L-seryl-[protein] + ATP = O-phospho-L-seryl-[protein] + ADP + H(+). The enzyme catalyses L-threonyl-[protein] + ATP = O-phospho-L-threonyl-[protein] + ADP + H(+). This Triticum aestivum (Wheat) protein is Rust resistance kinase Lr10.